A 625-amino-acid polypeptide reads, in one-letter code: 1-deoxy-D-xylulose-5-phosphate synthase 1 (625 aa).

Residues H74 and 115–117 (GHT) each bind thiamine diphosphate. D146 is a binding site for Mg(2+). Thiamine diphosphate-binding positions include 147 to 148 (GS), N175, Y286, and E368. Position 175 (N175) interacts with Mg(2+).

Belongs to the transketolase family. DXPS subfamily. Homodimer. Mg(2+) is required as a cofactor. It depends on thiamine diphosphate as a cofactor.

It catalyses the reaction D-glyceraldehyde 3-phosphate + pyruvate + H(+) = 1-deoxy-D-xylulose 5-phosphate + CO2. It functions in the pathway metabolic intermediate biosynthesis; 1-deoxy-D-xylulose 5-phosphate biosynthesis; 1-deoxy-D-xylulose 5-phosphate from D-glyceraldehyde 3-phosphate and pyruvate: step 1/1. Catalyzes the acyloin condensation reaction between C atoms 2 and 3 of pyruvate and glyceraldehyde 3-phosphate to yield 1-deoxy-D-xylulose-5-phosphate (DXP). This is 1-deoxy-D-xylulose-5-phosphate synthase 1 from Geobacter metallireducens (strain ATCC 53774 / DSM 7210 / GS-15).